We begin with the raw amino-acid sequence, 220 residues long: Ribonuclease P protein component 3 (220 aa).

The protein belongs to the eukaryotic/archaeal RNase P protein component 3 family. In terms of assembly, consists of a catalytic RNA component and at least 4-5 protein subunits.

The protein resides in the cytoplasm. It catalyses the reaction Endonucleolytic cleavage of RNA, removing 5'-extranucleotides from tRNA precursor.. Its function is as follows. Part of ribonuclease P, a protein complex that generates mature tRNA molecules by cleaving their 5'-ends. The chain is Ribonuclease P protein component 3 from Thermococcus kodakarensis (strain ATCC BAA-918 / JCM 12380 / KOD1) (Pyrococcus kodakaraensis (strain KOD1)).